Reading from the N-terminus, the 179-residue chain is uncharacterized protein (179 aa).

Disordered stretches follow at residues 26–103 (LSAV…SYED) and 136–179 (KHKA…SWFN). The segment covering 34 to 61 (QQGKNEEQRQHDEWVAERNREIQQEKQR) has biased composition (basic and acidic residues). The span at 63–79 (ANAQAAANKRAATAAAN) shows a compositional bias: low complexity. Basic and acidic residues-rich tracts occupy residues 82–103 (ARQDKLDAEASADKKRDQSYED) and 158–179 (GGRDLMKSVGKAEENKSDSWFN).

This is an uncharacterized protein from Escherichia coli (strain K12).